A 183-amino-acid chain; its full sequence is Peptide deformylase (183 aa).

Fe cation is bound by residues Cys-110 and His-153. The active site involves Glu-154. A Fe cation-binding site is contributed by His-157.

This sequence belongs to the polypeptide deformylase family. Requires Fe(2+) as cofactor.

It catalyses the reaction N-terminal N-formyl-L-methionyl-[peptide] + H2O = N-terminal L-methionyl-[peptide] + formate. Its function is as follows. Removes the formyl group from the N-terminal Met of newly synthesized proteins. Requires at least a dipeptide for an efficient rate of reaction. N-terminal L-methionine is a prerequisite for activity but the enzyme has broad specificity at other positions. This is Peptide deformylase from Listeria welshimeri serovar 6b (strain ATCC 35897 / DSM 20650 / CCUG 15529 / CIP 8149 / NCTC 11857 / SLCC 5334 / V8).